We begin with the raw amino-acid sequence, 346 residues long: 3 beta-hydroxysteroid dehydrogenase/Delta 5--&gt;4-isomerase (346 aa).

Catalysis depends on Y147, which acts as the Proton acceptor. Position 151 (K151) interacts with NAD(+).

It belongs to the 3-beta-HSD family.

It carries out the reaction a 3beta-hydroxy-Delta(5)-steroid + NAD(+) = a 3-oxo-Delta(5)-steroid + NADH + H(+). The catalysed reaction is a 3-oxo-Delta(5)-steroid = a 3-oxo-Delta(4)-steroid. It functions in the pathway lipid metabolism; steroid biosynthesis. In terms of biological role, catalyzes the oxidative conversion of Delta(5)-ene-3-beta-hydroxy steroid, and the oxidative conversion of ketosteroids. The 3-beta-HSD enzymatic system plays a crucial role in the biosynthesis of all classes of hormonal steroids. During viral infection, steroid production contributes to virulence by inhibiting the host inflammatory response. This Homo sapiens (Human) protein is 3 beta-hydroxysteroid dehydrogenase/Delta 5--&gt;4-isomerase (OPG174).